Consider the following 316-residue polypeptide: 4-hydroxy-3-methylbut-2-enyl diphosphate reductase (316 aa).

Residue C12 participates in [4Fe-4S] cluster binding. Positions 43 and 81 each coordinate (2E)-4-hydroxy-3-methylbut-2-enyl diphosphate. H43 and H81 together coordinate dimethylallyl diphosphate. Residues H43 and H81 each contribute to the isopentenyl diphosphate site. Residue C103 participates in [4Fe-4S] cluster binding. (2E)-4-hydroxy-3-methylbut-2-enyl diphosphate is bound at residue H131. H131 is a dimethylallyl diphosphate binding site. Residue H131 coordinates isopentenyl diphosphate. The Proton donor role is filled by E133. (2E)-4-hydroxy-3-methylbut-2-enyl diphosphate is bound at residue T170. A [4Fe-4S] cluster-binding site is contributed by C198. 3 residues coordinate (2E)-4-hydroxy-3-methylbut-2-enyl diphosphate: S226, N228, and S271. Dimethylallyl diphosphate contacts are provided by S226, N228, and S271. The isopentenyl diphosphate site is built by S226, N228, and S271.

It belongs to the IspH family. Requires [4Fe-4S] cluster as cofactor.

The enzyme catalyses isopentenyl diphosphate + 2 oxidized [2Fe-2S]-[ferredoxin] + H2O = (2E)-4-hydroxy-3-methylbut-2-enyl diphosphate + 2 reduced [2Fe-2S]-[ferredoxin] + 2 H(+). It carries out the reaction dimethylallyl diphosphate + 2 oxidized [2Fe-2S]-[ferredoxin] + H2O = (2E)-4-hydroxy-3-methylbut-2-enyl diphosphate + 2 reduced [2Fe-2S]-[ferredoxin] + 2 H(+). The protein operates within isoprenoid biosynthesis; dimethylallyl diphosphate biosynthesis; dimethylallyl diphosphate from (2E)-4-hydroxy-3-methylbutenyl diphosphate: step 1/1. It functions in the pathway isoprenoid biosynthesis; isopentenyl diphosphate biosynthesis via DXP pathway; isopentenyl diphosphate from 1-deoxy-D-xylulose 5-phosphate: step 6/6. Catalyzes the conversion of 1-hydroxy-2-methyl-2-(E)-butenyl 4-diphosphate (HMBPP) into a mixture of isopentenyl diphosphate (IPP) and dimethylallyl diphosphate (DMAPP). Acts in the terminal step of the DOXP/MEP pathway for isoprenoid precursor biosynthesis. This Bacillus anthracis (strain A0248) protein is 4-hydroxy-3-methylbut-2-enyl diphosphate reductase.